The chain runs to 218 residues: Cytidylate kinase (218 aa).

Position 11-19 (11-19 (GPGASGKGT)) interacts with ATP.

This sequence belongs to the cytidylate kinase family. Type 1 subfamily.

Its subcellular location is the cytoplasm. The catalysed reaction is CMP + ATP = CDP + ADP. It carries out the reaction dCMP + ATP = dCDP + ADP. The sequence is that of Cytidylate kinase from Neisseria gonorrhoeae (strain ATCC 700825 / FA 1090).